The primary structure comprises 126 residues: Histone H2B type 1-B (126 aa).

The segment covering 1-12 (MPEPSKSAPAPK) has biased composition (low complexity). Residues 1-35 (MPEPSKSAPAPKKGSKKAITKAQKKDGKKRKRSRK) form a disordered region. Position 2 is an N-acetylproline (P2). E3 is subject to ADP-ribosyl glutamic acid. N6-(2-hydroxyisobutyryl)lysine; alternate is present on K6. N6-(beta-hydroxybutyryl)lysine; alternate is present on K6. Residue K6 is modified to N6-acetyllysine; alternate. An N6-butyryllysine; alternate modification is found at K6. K6 carries the N6-crotonyllysine; alternate modification. K6 is modified (N6-lactoyllysine; alternate). K6 is covalently cross-linked (Glycyl lysine isopeptide (Lys-Gly) (interchain with G-Cter in SUMO2); alternate). S7 is modified (ADP-ribosylserine). K12 is subject to N6-(beta-hydroxybutyryl)lysine; alternate. Residues K12 and K13 each carry the N6-acetyllysine; alternate modification. N6-crotonyllysine; alternate is present on residues K12 and K13. K12 is modified (N6-lactoyllysine; alternate). N6-(2-hydroxyisobutyryl)lysine; alternate is present on K13. A Phosphoserine; by STK4/MST1 modification is found at S15. 4 positions are modified to N6-acetyllysine; alternate: K16, K17, K21, and K24. N6-crotonyllysine; alternate is present on residues K16, K17, K21, and K24. N6-lactoyllysine; alternate is present on residues K16, K17, K21, and K24. K17 and K21 each carry N6-(beta-hydroxybutyryl)lysine; alternate. K17 carries the N6-glutaryllysine; alternate modification. An N6-(2-hydroxyisobutyryl)lysine; alternate mark is found at K21 and K24. K21 is modified (N6-butyryllysine; alternate). A Glycyl lysine isopeptide (Lys-Gly) (interchain with G-Cter in SUMO2); alternate cross-link involves residue K21. K25 carries the post-translational modification N6-(2-hydroxyisobutyryl)lysine. The residue at position 35 (K35) is an N6-(2-hydroxyisobutyryl)lysine; alternate. K35 is subject to N6-(beta-hydroxybutyryl)lysine; alternate. At K35 the chain carries N6-crotonyllysine; alternate. Position 35 is an N6-glutaryllysine; alternate (K35). Residue K35 is modified to N6-succinyllysine; alternate. K35 is covalently cross-linked (Glycyl lysine isopeptide (Lys-Gly) (interchain with G-Cter in ubiquitin); alternate). Position 36 is a polyADP-ribosyl glutamic acid (E36). Residue S37 is modified to Phosphoserine; by AMPK. N6-(2-hydroxyisobutyryl)lysine; alternate is present on residues K44, K47, and K58. K44 bears the N6-lactoyllysine; alternate mark. Residues K44 and K47 each carry the N6-glutaryllysine; alternate modification. An N6-methyllysine; alternate modification is found at K47. K58 carries the N6,N6-dimethyllysine; alternate modification. R80 bears the Dimethylated arginine mark. K86 carries the post-translational modification N6-(2-hydroxyisobutyryl)lysine; alternate. Residue K86 is modified to N6-(beta-hydroxybutyryl)lysine; alternate. The residue at position 86 (K86) is an N6-acetyllysine; alternate. K86 is modified (N6-lactoyllysine; alternate). At K86 the chain carries N6,N6,N6-trimethyllysine; alternate. 2 positions are modified to omega-N-methylarginine: R87 and R93. K109 is modified (N6-(2-hydroxyisobutyryl)lysine; alternate). Position 109 is an N6-lactoyllysine; alternate (K109). An N6-glutaryllysine; alternate modification is found at K109. An N6-methyllysine; alternate modification is found at K109. O-linked (GlcNAc) serine glycosylation occurs at S113. T116 is modified (phosphothreonine). N6-(2-hydroxyisobutyryl)lysine; alternate occurs at positions 117 and 121. Residues K117 and K121 each carry the N6-(beta-hydroxybutyryl)lysine; alternate modification. N6-lactoyllysine; alternate occurs at positions 117 and 121. 2 positions are modified to N6-glutaryllysine; alternate: K117 and K121. N6-succinyllysine; alternate is present on residues K117 and K121. K117 is modified (N6-malonyllysine; alternate). An N6-methylated lysine; alternate modification is found at K117. Residue K121 forms a Glycyl lysine isopeptide (Lys-Gly) (interchain with G-Cter in ubiquitin); alternate linkage.

The protein belongs to the histone H2B family. As to quaternary structure, the nucleosome is a histone octamer containing two molecules each of H2A, H2B, H3 and H4 assembled in one H3-H4 heterotetramer and two H2A-H2B heterodimers. The octamer wraps approximately 147 bp of DNA. In terms of processing, monoubiquitination at Lys-35 (H2BK34Ub) by the MSL1/MSL2 dimer is required for histone H3 'Lys-4' (H3K4me) and 'Lys-79' (H3K79me) methylation and transcription activation at specific gene loci, such as HOXA9 and MEIS1 loci. Similarly, monoubiquitination at Lys-121 (H2BK120Ub) by the RNF20/40 complex gives a specific tag for epigenetic transcriptional activation and is also prerequisite for histone H3 'Lys-4' and 'Lys-79' methylation. It also functions cooperatively with the FACT dimer to stimulate elongation by RNA polymerase II. H2BK120Ub also acts as a regulator of mRNA splicing: deubiquitination by USP49 is required for efficient cotranscriptional splicing of a large set of exons. Phosphorylation at Ser-37 (H2BS36ph) by AMPK in response to stress promotes transcription. Phosphorylated on Ser-15 (H2BS14ph) by STK4/MST1 during apoptosis; which facilitates apoptotic chromatin condensation. Also phosphorylated on Ser-15 in response to DNA double strand breaks (DSBs), and in correlation with somatic hypermutation and immunoglobulin class-switch recombination. Post-translationally, glcNAcylation at Ser-113 promotes monoubiquitination of Lys-121. It fluctuates in response to extracellular glucose, and associates with transcribed genes. In terms of processing, ADP-ribosylated by PARP1 or PARP2 on Ser-7 (H2BS6ADPr) in response to DNA damage. H2BS6ADPr promotes recruitment of CHD1L. Mono-ADP-ribosylated on Glu-3 (H2BE2ADPr) by PARP3 in response to single-strand breaks. Poly ADP-ribosylation on Glu-36 (H2BE35ADPr) by PARP1 regulates adipogenesis: it inhibits phosphorylation at Ser-37 (H2BS36ph), thereby blocking expression of pro-adipogenetic genes. Crotonylation (Kcr) is specifically present in male germ cells and marks testis-specific genes in post-meiotic cells, including X-linked genes that escape sex chromosome inactivation in haploid cells. Crotonylation marks active promoters and enhancers and confers resistance to transcriptional repressors. It is also associated with post-meiotically activated genes on autosomes. Post-translationally, lactylated in macrophages by EP300/P300 by using lactoyl-CoA directly derived from endogenous or exogenous lactate, leading to stimulates gene transcription.

Its subcellular location is the nucleus. It localises to the chromosome. Functionally, core component of nucleosome. Nucleosomes wrap and compact DNA into chromatin, limiting DNA accessibility to the cellular machineries which require DNA as a template. Histones thereby play a central role in transcription regulation, DNA repair, DNA replication and chromosomal stability. DNA accessibility is regulated via a complex set of post-translational modifications of histones, also called histone code, and nucleosome remodeling. In Homo sapiens (Human), this protein is Histone H2B type 1-B.